A 176-amino-acid polypeptide reads, in one-letter code: Phosphopantetheine adenylyltransferase (176 aa).

Residue Thr11 coordinates substrate. ATP contacts are provided by residues 11–12 and His19; that span reads TF. 3 residues coordinate substrate: Lys43, Leu93, and Arg107. Residues Glu117 and 141-147 contribute to the ATP site; that span reads LSVVSSS.

This sequence belongs to the bacterial CoaD family. As to quaternary structure, homohexamer. It depends on Mg(2+) as a cofactor.

Its subcellular location is the cytoplasm. It carries out the reaction (R)-4'-phosphopantetheine + ATP + H(+) = 3'-dephospho-CoA + diphosphate. Its pathway is cofactor biosynthesis; coenzyme A biosynthesis; CoA from (R)-pantothenate: step 4/5. Its function is as follows. Reversibly transfers an adenylyl group from ATP to 4'-phosphopantetheine, yielding dephospho-CoA (dPCoA) and pyrophosphate. This Tropheryma whipplei (strain TW08/27) (Whipple's bacillus) protein is Phosphopantetheine adenylyltransferase.